Here is a 491-residue protein sequence, read N- to C-terminus: Lysine--tRNA ligase 1 (491 aa).

The Mg(2+) site is built by glutamate 400 and glutamate 407.

This sequence belongs to the class-II aminoacyl-tRNA synthetase family. As to quaternary structure, homodimer. Requires Mg(2+) as cofactor.

Its subcellular location is the cytoplasm. The enzyme catalyses tRNA(Lys) + L-lysine + ATP = L-lysyl-tRNA(Lys) + AMP + diphosphate. This chain is Lysine--tRNA ligase 1, found in Mycoplasmopsis pulmonis (strain UAB CTIP) (Mycoplasma pulmonis).